Reading from the N-terminus, the 266-residue chain is E3 ubiquitin-protein ligase RNF170 (266 aa).

Residues 1 to 26 (MEGSVCVDGAAAPAPDEASLIEGVSN) lie on the Lumenal side of the membrane. A helical transmembrane segment spans residues 27–47 (AVLLVLVLSVTLLAGLTTLLC). Residues 48 to 209 (RSEQQRIHPE…GGLFWMFRVR (162 aa)) are Cytoplasmic-facing. The segment at 88-131 (CPVCLQQAVLPVETNCGHLFCGSCIIAYWRYGTWLGAISCPICR) adopts an RING-type zinc-finger fold. Residues 210–230 (ILLCVCGALAYLVSPLDFLPE) form a helical membrane-spanning segment. Residue Gly231 is a topological domain, lumenal. Residues 232–252 (VLGLLGFLDDFFVILLLFIYI) form a helical membrane-spanning segment. Residues 253–266 (SIMYREVVTQRLAG) are Cytoplasmic-facing.

Highly expressed in the developing brain, and less within intersomitic structures of the trunk.

Its subcellular location is the endoplasmic reticulum membrane. The enzyme catalyses S-ubiquitinyl-[E2 ubiquitin-conjugating enzyme]-L-cysteine + [acceptor protein]-L-lysine = [E2 ubiquitin-conjugating enzyme]-L-cysteine + N(6)-ubiquitinyl-[acceptor protein]-L-lysine.. Its pathway is protein modification; protein ubiquitination. Functionally, E3 ubiquitin-protein ligase that plays an essential role in stimulus-induced inositol 1,4,5-trisphosphate receptor (ITPR) ubiquitination and degradation via the endoplasmic reticulum-associated degradation (ERAD) pathway. Also involved in ITPR turnover in resting cells. This chain is E3 ubiquitin-protein ligase RNF170 (rnf170), found in Danio rerio (Zebrafish).